Here is a 323-residue protein sequence, read N- to C-terminus: Phosphate acyltransferase (323 aa).

It belongs to the PlsX family. As to quaternary structure, homodimer. Probably interacts with PlsY.

It localises to the cytoplasm. It catalyses the reaction a fatty acyl-[ACP] + phosphate = an acyl phosphate + holo-[ACP]. The protein operates within lipid metabolism; phospholipid metabolism. Catalyzes the reversible formation of acyl-phosphate (acyl-PO(4)) from acyl-[acyl-carrier-protein] (acyl-ACP). This enzyme utilizes acyl-ACP as fatty acyl donor, but not acyl-CoA. The sequence is that of Phosphate acyltransferase from Finegoldia magna (strain ATCC 29328 / DSM 20472 / WAL 2508) (Peptostreptococcus magnus).